Reading from the N-terminus, the 313-residue chain is 4-diphosphocytidyl-2-C-methyl-D-erythritol kinase (313 aa).

The active site involves K10. 95-105 (PVTAGLGGGSS) contacts ATP. Residue D136 is part of the active site. Positions 289–313 (HPRVSPWRSPRSASSRSTRRSSRPT) are disordered. Low complexity predominate over residues 292-304 (VSPWRSPRSASSR).

Belongs to the GHMP kinase family. IspE subfamily.

The catalysed reaction is 4-CDP-2-C-methyl-D-erythritol + ATP = 4-CDP-2-C-methyl-D-erythritol 2-phosphate + ADP + H(+). It participates in isoprenoid biosynthesis; isopentenyl diphosphate biosynthesis via DXP pathway; isopentenyl diphosphate from 1-deoxy-D-xylulose 5-phosphate: step 3/6. Catalyzes the phosphorylation of the position 2 hydroxy group of 4-diphosphocytidyl-2C-methyl-D-erythritol. The chain is 4-diphosphocytidyl-2-C-methyl-D-erythritol kinase from Anaeromyxobacter sp. (strain K).